Reading from the N-terminus, the 509-residue chain is UDP-N-acetylmuramoyl-L-alanyl-D-glutamate--2,6-diaminopimelate ligase (509 aa).

Ser-32 contributes to the UDP-N-acetyl-alpha-D-muramoyl-L-alanyl-D-glutamate binding site. An ATP-binding site is contributed by Gly-117–Thr-123. Residues Thr-159–Thr-160, Ser-186, Gln-192, and Arg-194 contribute to the UDP-N-acetyl-alpha-D-muramoyl-L-alanyl-D-glutamate site. Position 226 is an N6-carboxylysine (Lys-226). Residues Arg-401, Asp-425–Arg-428, Gly-476, and Glu-480 contribute to the meso-2,6-diaminopimelate site. Residues Asp-425–Arg-428 carry the Meso-diaminopimelate recognition motif motif.

This sequence belongs to the MurCDEF family. MurE subfamily. The cofactor is Mg(2+). In terms of processing, carboxylation is probably crucial for Mg(2+) binding and, consequently, for the gamma-phosphate positioning of ATP.

The protein localises to the cytoplasm. The enzyme catalyses UDP-N-acetyl-alpha-D-muramoyl-L-alanyl-D-glutamate + meso-2,6-diaminopimelate + ATP = UDP-N-acetyl-alpha-D-muramoyl-L-alanyl-gamma-D-glutamyl-meso-2,6-diaminopimelate + ADP + phosphate + H(+). It functions in the pathway cell wall biogenesis; peptidoglycan biosynthesis. Catalyzes the addition of meso-diaminopimelic acid to the nucleotide precursor UDP-N-acetylmuramoyl-L-alanyl-D-glutamate (UMAG) in the biosynthesis of bacterial cell-wall peptidoglycan. This chain is UDP-N-acetylmuramoyl-L-alanyl-D-glutamate--2,6-diaminopimelate ligase, found in Prochlorococcus marinus (strain NATL2A).